The primary structure comprises 333 residues: Eukaryotic translation initiation factor 3 subunit H-B (333 aa).

Positions 20–154 (IQIEGLVVMK…LKAYRLTPKL (135 aa)) constitute an MPN domain. Residues 249–295 (SKQQQQKHQYVQRRQQENAQRQSRGEPPLPEEDLTKMFKPPQPPPRM) form a disordered region. Positions 250–261 (KQQQQKHQYVQR) are enriched in low complexity.

Belongs to the eIF-3 subunit H family. As to quaternary structure, component of the eukaryotic translation initiation factor 3 (eIF-3) complex, which is composed of 13 subunits: eif3a, eif3b, eif3c, eif3d, eif3e, eif3f, eif3g, eif3h, eif3i, eif3j, eif3k, eif3l and eif3m.

It is found in the cytoplasm. Functionally, component of the eukaryotic translation initiation factor 3 (eIF-3) complex, which is involved in protein synthesis of a specialized repertoire of mRNAs and, together with other initiation factors, stimulates binding of mRNA and methionyl-tRNAi to the 40S ribosome. The eIF-3 complex specifically targets and initiates translation of a subset of mRNAs involved in cell proliferation. This Danio rerio (Zebrafish) protein is Eukaryotic translation initiation factor 3 subunit H-B (eif3hb).